A 1200-amino-acid chain; its full sequence is NACHT, LRR and PYD domains-containing protein 5 (1200 aa).

Residues 57–148 (SLTFSSYGLQ…SEKARDDMKR (92 aa)) form the Pyrin domain. A compositionally biased stretch (basic and acidic residues) spans 142–152 (ARDDMKRHSPE). A disordered region spans residues 142–232 (ARDDMKRHSP…TEEQGHGGDT (91 aa)). A compositionally biased stretch (polar residues) spans 173-182 (QAVQQDSATA). Low complexity-rich tracts occupy residues 192 to 202 (QAMEQEGATAA) and 209 to 221 (ISQA…ATAA). Positions 280–602 (RTVVLHGKSG…ALYYVLEGLE (323 aa)) constitute an NACHT domain. 286-293 (GKSGIGKS) contributes to the ATP binding site. 13 LRR repeats span residues 704-727 (LNSF…SFCL), 730-753 (CPYL…AEAC), 780-803 (HPHL…TLCA), 809-832 (TCKI…LWRI), 836-863 (NRNL…ALKH), 865-892 (KCLL…ILTT), 893-916 (SPSL…PLSD), 950-973 (NRSL…LLCR), 979-1002 (HCSL…FLAL), 1007-1034 (NSWL…VMRE), 1036-1059 (SCHL…SLSC), 1064-1092 (SRHL…LKQK), and 1121-1142 (NRHL…MMKL).

Belongs to the NLRP family. Component of the subcortical maternal complex (SCMC), at least composed of NLRP5, KHDC3, OOEP, and TLE6 isoform 1. Within the complex, interacts with OOEP, KHDC3L and TLE6. The SCMC may facilitate translocation of its components between the nuclear and cytoplasmic compartments. As part of the SCMC interacts with the SCMC-associated protein ZBED3. As part of the SCMC interacts with the SCMC-associated protein CFL1/Cofilin-1. Interacts with PRKCE. Interacts with TUBB3 at cytoskeleton microtubules. Post-translationally, phosphorylated by PRKCE. In terms of tissue distribution, expressed in cumulus cells (at protein level). Highly abundant in oocytes and early embryos, however poorly expressed in somatic tissues such as the liver and spinal cord.

It localises to the cytoplasm. It is found in the cytoplasmic vesicle. Its subcellular location is the secretory vesicle. The protein resides in the cortical granule. The protein localises to the mitochondrion. It localises to the nucleus. It is found in the nucleolus. Its subcellular location is the golgi apparatus. In terms of biological role, component of the subcortical maternal complex (SCMC), a multiprotein complex that plays a key role in early embryonic development. The SCMC complex is a structural constituent of cytoplasmic lattices, which consist in fibrous structures found in the cytoplasm of oocytes and preimplantation embryos. They are required to store maternal proteins critical for embryonic development, such as proteins that control epigenetic reprogramming of the preimplantation embryo, and prevent their degradation or activation. Required for the localization of cortical granules to the cortex of oocytes, via association with the cortical actin scaffold. Required for cortical actin clearance prior to oocyte exocytosis and prevention of polyspermy. Involved in regulating post-fertilization Ca(2+) release and endoplasmic reticulum storage (ER) storage via regulation of cellular localization. May be involved in the localization of mitochondria to the cytoplasm and perinuclear region in oocytes and early stage embryos, independent of its role in CPL formation. The sequence is that of NACHT, LRR and PYD domains-containing protein 5 (NLRP5) from Homo sapiens (Human).